The chain runs to 478 residues: Probable glucan endo-1,3-beta-glucosidase A6 (478 aa).

Residues 1 to 20 (MSLLAFFLFTILVFSSSCCS) form the signal peptide. The active-site Proton donor is glutamate 135. The active-site Nucleophile is the glutamate 280. Cysteine 390 and cysteine 453 form a disulfide bridge.

It belongs to the glycosyl hydrolase 17 family. Contains two additional disulfide bonds, but it is unclear if they are between the pairs Cys-409-Cys-416 and Cys-425-Cys-471 or between the pairs Cys-409-Cys-471 and Cys-416-Cys-425. Anthers.

The enzyme catalyses Hydrolysis of (1-&gt;3)-beta-D-glucosidic linkages in (1-&gt;3)-beta-D-glucans.. In terms of biological role, probable beta-1,3-glucanase that may be involved in the degradation of callose walls around the microspore tetrad during pollen development. May be required for pollen exine formation. This chain is Probable glucan endo-1,3-beta-glucosidase A6, found in Arabidopsis thaliana (Mouse-ear cress).